A 483-amino-acid polypeptide reads, in one-letter code: UDP-N-acetylmuramyl-tripeptide synthetase (483 aa).

Serine 43 contacts UDP-N-acetyl-alpha-D-muramoyl-L-alanyl-D-glutamate. 116-122 lines the ATP pocket; sequence GTKGKTT. UDP-N-acetyl-alpha-D-muramoyl-L-alanyl-D-glutamate is bound by residues 160-161, serine 187, and arginine 195; that span reads TT. Lysine 229 is subject to N6-carboxylysine.

Belongs to the MurCDEF family. MurE subfamily. Post-translationally, carboxylation is probably crucial for Mg(2+) binding and, consequently, for the gamma-phosphate positioning of ATP.

It is found in the cytoplasm. The protein operates within cell wall biogenesis; peptidoglycan biosynthesis. Functionally, catalyzes the addition of an amino acid to the nucleotide precursor UDP-N-acetylmuramoyl-L-alanyl-D-glutamate (UMAG) in the biosynthesis of bacterial cell-wall peptidoglycan. The sequence is that of UDP-N-acetylmuramyl-tripeptide synthetase from Lactococcus lactis subsp. cremoris (strain MG1363).